The following is a 143-amino-acid chain: Holo-[acyl-carrier-protein] synthase (143 aa).

Mg(2+)-binding residues include D8 and E62.

It belongs to the P-Pant transferase superfamily. AcpS family. Requires Mg(2+) as cofactor.

Its subcellular location is the cytoplasm. It carries out the reaction apo-[ACP] + CoA = holo-[ACP] + adenosine 3',5'-bisphosphate + H(+). Transfers the 4'-phosphopantetheine moiety from coenzyme A to a Ser of acyl-carrier-protein. In Cupriavidus metallidurans (strain ATCC 43123 / DSM 2839 / NBRC 102507 / CH34) (Ralstonia metallidurans), this protein is Holo-[acyl-carrier-protein] synthase.